Reading from the N-terminus, the 812-residue chain is Eukaryotic translation initiation factor 3 subunit C (812 aa).

Positions 1–110 are disordered; it reads MSRFFSSNYE…EESDEEDGKK (110 aa). Composition is skewed to acidic residues over residues 18 to 30 and 38 to 64; these read SEED…EEDL and SELD…DSDD. A phosphoserine mark is found at serine 98, serine 99, and serine 103. Residues 608 to 783 enclose the PCI domain; it reads YHQHINLDLI…TIFVVEKGDE (176 aa).

This sequence belongs to the eIF-3 subunit C family. The eukaryotic translation initiation factor 3 (eIF-3) core complex is composed of TIF32, PRT1, NIP1, TIF34 and TIF35. A subcomplex of TIF32, NIP1 and PRT1 mediates the interaction with eIF-1, TIF5/eIF-5 and HCR1. The factors eIF-1, eIF-2, eIF-3, TIF5/eIF-5 and methionyl-tRNAi form a multifactor complex (MFC) that may bind to the 40S ribosome. TIF32, NIP1 and TIF5/eIF-5 comprise a minimal 40S-ribosome-binding unit. NIP1 interacts with TIF5/eIF-5 and SUI1.

The protein localises to the cytoplasm. Component of the eukaryotic translation initiation factor 3 (eIF-3) complex, which is involved in protein synthesis of a specialized repertoire of mRNAs and, together with other initiation factors, stimulates binding of mRNA and methionyl-tRNAi to the 40S ribosome. The eIF-3 complex specifically targets and initiates translation of a subset of mRNAs involved in cell proliferation. The polypeptide is Eukaryotic translation initiation factor 3 subunit C (Saccharomyces cerevisiae (strain ATCC 204508 / S288c) (Baker's yeast)).